The primary structure comprises 130 residues: Seminal plasma protein pB1 (130 aa).

An N-terminal signal peptide occupies residues 1 to 25 (MAPRLGIFLLWAGVSVFLPLDPVNG). Fibronectin type-II domains are found at residues 39–83 (TSDD…YCRS) and 84–130 (TDYA…WRYC). Intrachain disulfides connect Cys-44-Cys-68, Cys-58-Cys-81, Cys-89-Cys-115, and Cys-103-Cys-130.

The protein belongs to the seminal plasma protein family. As to expression, component of seminal plasma.

It localises to the secreted. May form a complex with spermadhesin AQN-1 which possesses phosphorylcholine-binding activity. The chain is Seminal plasma protein pB1 from Sus scrofa (Pig).